The chain runs to 100 residues: Large ribosomal subunit protein bL21 (100 aa).

The protein belongs to the bacterial ribosomal protein bL21 family. As to quaternary structure, part of the 50S ribosomal subunit. Contacts protein L20.

This protein binds to 23S rRNA in the presence of protein L20. The chain is Large ribosomal subunit protein bL21 from Ureaplasma parvum serovar 3 (strain ATCC 27815 / 27 / NCTC 11736).